The primary structure comprises 308 residues: Glycerol-3-phosphate dehydrogenase [NAD(P)+] (308 aa).

Trp13, Arg33, and Lys81 together coordinate NADPH. 2 residues coordinate sn-glycerol 3-phosphate: Lys81 and Gly109. Ala113 provides a ligand contact to NADPH. Positions 163, 216, 226, 227, and 228 each coordinate sn-glycerol 3-phosphate. The active-site Proton acceptor is the Lys163. Residue Arg227 coordinates NADPH. Residue Glu253 coordinates NADPH.

It belongs to the NAD-dependent glycerol-3-phosphate dehydrogenase family.

The protein localises to the cytoplasm. It carries out the reaction sn-glycerol 3-phosphate + NAD(+) = dihydroxyacetone phosphate + NADH + H(+). It catalyses the reaction sn-glycerol 3-phosphate + NADP(+) = dihydroxyacetone phosphate + NADPH + H(+). Its pathway is membrane lipid metabolism; glycerophospholipid metabolism. Its function is as follows. Catalyzes the reduction of the glycolytic intermediate dihydroxyacetone phosphate (DHAP) to sn-glycerol 3-phosphate (G3P), the key precursor for phospholipid synthesis. The polypeptide is Glycerol-3-phosphate dehydrogenase [NAD(P)+] (Thermosynechococcus vestitus (strain NIES-2133 / IAM M-273 / BP-1)).